We begin with the raw amino-acid sequence, 519 residues long: T-complex protein 11-like protein 2 (519 aa).

The tract at residues 1-57 (MPFNGEKQCVSEDQPSDSDSSRFSESMASLSDYECSRQSFTSDSSSKSSSPASTSPP) is disordered. Phosphoserine is present on serine 16. 2 stretches are compositionally biased toward low complexity: residues 17–29 (DSDSSRFSESMAS) and 36–55 (SRQSFTSDSSSKSSSPASTS).

This sequence belongs to the TCP11 family. Interacts with FMNL2; this interaction promotes muscle-derived satellite cell (MDSC) migration and differentiation.

It is found in the cytoplasm. The protein localises to the cytoskeleton. Functionally, promotes the migration of muscle-derived satellite cells (MDSCs) during differentiation throught interaction with FMNL2 and therefore may participate in microfilament assembly. This chain is T-complex protein 11-like protein 2, found in Bos taurus (Bovine).